The sequence spans 385 residues: Proteinase-activated receptor 4 (385 aa).

A signal peptide spans 1–17 (MWGRLLLWPLVLGFSLS). A propeptide spans 18-47 (GGTQTPSVYDESGSTGGGDDSTPSILPAPR) (removed for receptor activation). The tract at residues 21-42 (QTPSVYDESGSTGGGDDSTPSI) is disordered. The Extracellular segment spans residues 48–82 (GYPGQVCANDSDTLELPDSSRALLLGWVPTRLVPA). N-linked (GlcNAc...) asparagine glycosylation is present at Asn56. The chain crosses the membrane as a helical span at residues 83-103 (LYGLVLVVGLPANGLALWVLA). Residues 104–108 (TQAPR) lie on the Cytoplasmic side of the membrane. Residues 109–129 (LPSTMLLMNLAAADLLLALAL) traverse the membrane as a helical segment. Over 130-151 (PPRIAYHLRGQRWPFGEAACRL) the chain is Extracellular. An intrachain disulfide couples Cys149 to Cys228. Residues 152 to 172 (ATAALYGHMYGSVLLLAAVSL) traverse the membrane as a helical segment. At 173–192 (DRYLALVHPLRARALRGRRL) the chain is on the cytoplasmic side. The chain crosses the membrane as a helical span at residues 193-213 (ALGLCMAAWLMAAALALPLTL). At 214–247 (QRQTFRLARSDRVLCHDALPLDAQASHWQPAFTC) the chain is on the extracellular side. Residues 248–268 (LALLGCFLPLLAMLLCYGATL) form a helical membrane-spanning segment. At 269–283 (HTLAASGRRYGHALR) the chain is on the cytoplasmic side. The chain crosses the membrane as a helical span at residues 284–304 (LTAVVLASAVAFFVPSNLLLL). Residues 305–319 (LHYSDPSPSAWGNLY) lie on the Extracellular side of the membrane. The chain crosses the membrane as a helical span at residues 320 to 343 (GAYVPSLALSTLNSCVDPFIYYYV). Residues 344-385 (SAEFRDKVRAGLFQRSPGDTVASKASAEGGSRGMGTHSSLLQ) lie on the Cytoplasmic side of the membrane. A disordered region spans residues 362 to 385 (DTVASKASAEGGSRGMGTHSSLLQ).

Belongs to the G-protein coupled receptor 1 family. Post-translationally, a proteolytic cleavage generates a new N-terminus that functions as a tethered ligand. Widely expressed, with highest levels in lung, pancreas, thyroid, testis and small intestine. Not expressed in brain, kidney, spinal cord and peripheral blood leukocytes. Also detected in platelets.

It localises to the cell membrane. Activated upon interaction by mucunain, a cowhage (Mucuna pruriens) plant cysteine proteinase. In terms of biological role, receptor for activated thrombin or trypsin coupled to G proteins that stimulate phosphoinositide hydrolysis. May play a role in platelets activation. This chain is Proteinase-activated receptor 4 (F2RL3), found in Homo sapiens (Human).